The sequence spans 595 residues: Aspartate--tRNA ligase (595 aa).

Glu-173 is an L-aspartate binding site. Residues 197–200 (QLFK) are aspartate. Arg-219 contributes to the L-aspartate binding site. ATP-binding positions include 219–221 (RDE) and Gln-228. Residue His-449 participates in L-aspartate binding. ATP is bound at residue Glu-483. Arg-490 is an L-aspartate binding site. ATP is bound at residue 535–538 (GLDR).

Belongs to the class-II aminoacyl-tRNA synthetase family. Type 1 subfamily. In terms of assembly, homodimer.

The protein localises to the cytoplasm. The catalysed reaction is tRNA(Asp) + L-aspartate + ATP = L-aspartyl-tRNA(Asp) + AMP + diphosphate. Catalyzes the attachment of L-aspartate to tRNA(Asp) in a two-step reaction: L-aspartate is first activated by ATP to form Asp-AMP and then transferred to the acceptor end of tRNA(Asp). This chain is Aspartate--tRNA ligase, found in Shewanella woodyi (strain ATCC 51908 / MS32).